The following is a 140-amino-acid chain: Putative pre-16S rRNA nuclease (140 aa).

The protein belongs to the YqgF nuclease family.

It localises to the cytoplasm. Its function is as follows. Could be a nuclease involved in processing of the 5'-end of pre-16S rRNA. The polypeptide is Putative pre-16S rRNA nuclease (Serratia proteamaculans (strain 568)).